An 804-amino-acid chain; its full sequence is Probable phosphoketolase (804 aa).

It belongs to the XFP family. Thiamine diphosphate is required as a cofactor.

This Mycobacterium avium (strain 104) protein is Probable phosphoketolase.